The following is a 172-amino-acid chain: uncharacterized protein (172 aa).

A signal peptide spans 1-22; sequence MKLFQLLLLVLTISSFIISNNG. The Extracellular segment spans residues 23-140; it reads LVESHQGRMH…FSYENSSNET (118 aa). The interval 27-69 is disordered; the sequence is HQGRMHRGSGERHHRAGGNQQQPQPPSEQQVESSYNSNDDGSS. Basic residues predominate over residues 29–42; that stretch reads GRMHRGSGERHHRA. Over residues 53 to 69 the composition is skewed to low complexity; the sequence is SEQQVESSYNSNDDGSS. 2 N-linked (GlcNAc...) asparagine glycosylation sites follow: Asn135 and Asn138. A helical membrane pass occupies residues 141 to 161; the sequence is IVIYINPVTLVFTLVLLLTFI. Over 162–172 the chain is Cytoplasmic; sequence VLTITQSLRKY.

The protein resides in the membrane. This is an uncharacterized protein from Dictyostelium discoideum (Social amoeba).